Consider the following 152-residue polypeptide: D-aminoacyl-tRNA deacylase (152 aa).

The Gly-cisPro motif, important for rejection of L-amino acids motif lies at 137-138; the sequence is GP.

Belongs to the DTD family. Homodimer.

It is found in the cytoplasm. The catalysed reaction is glycyl-tRNA(Ala) + H2O = tRNA(Ala) + glycine + H(+). It carries out the reaction a D-aminoacyl-tRNA + H2O = a tRNA + a D-alpha-amino acid + H(+). An aminoacyl-tRNA editing enzyme that deacylates mischarged D-aminoacyl-tRNAs. Also deacylates mischarged glycyl-tRNA(Ala), protecting cells against glycine mischarging by AlaRS. Acts via tRNA-based rather than protein-based catalysis; rejects L-amino acids rather than detecting D-amino acids in the active site. By recycling D-aminoacyl-tRNA to D-amino acids and free tRNA molecules, this enzyme counteracts the toxicity associated with the formation of D-aminoacyl-tRNA entities in vivo and helps enforce protein L-homochirality. The chain is D-aminoacyl-tRNA deacylase from Thermus aquaticus.